The sequence spans 1008 residues: Histone deacetylase complex subunit SAP130-A (1008 aa).

Over residues Met-1–Gly-31 the composition is skewed to polar residues. Disordered regions lie at residues Met-1–Ser-44, Ser-113–Pro-134, Ile-415–Ser-435, and Thr-617–Ile-720. Residues Glu-35 to Ser-44 show a composition bias toward basic and acidic residues. Residues Pro-618–Arg-644 show a composition bias toward polar residues. Positions Ala-678–Val-697 are enriched in low complexity.

It belongs to the SAP130 family.

Its subcellular location is the nucleus. Functionally, acts as a transcriptional repressor. In Xenopus laevis (African clawed frog), this protein is Histone deacetylase complex subunit SAP130-A (sap130-a).